We begin with the raw amino-acid sequence, 355 residues long: Guanine nucleotide-binding protein subunit alpha-14 (355 aa).

The G-alpha domain occupies 34–355 (RELKLLLLGT…QLNLREFNLV (322 aa)). Residues 37-50 (KLLLLGTGESGKST) form a G1 motif region. Residues 42 to 49 (GTGESGKS), 176 to 182 (LRVRVPT), 201 to 205 (DVGGQ), 270 to 273 (NKKD), and Ala327 each bind GTP. Residues Ser49 and Thr182 each contribute to the Mg(2+) site. The tract at residues 174-182 (DVLRVRVPT) is G2 motif. The interval 197 to 206 (FRMVDVGGQR) is G3 motif. A G4 motif region spans residues 266–273 (ILFLNKKD). A G5 motif region spans residues 325-330 (TCATDT).

It belongs to the G-alpha family. G(q) subfamily. As to quaternary structure, g proteins are composed of 3 units; alpha, beta and gamma. The alpha chain contains the guanine nucleotide binding site.

Guanine nucleotide-binding proteins (G proteins) are involved as modulators or transducers in various transmembrane signaling systems. This is Guanine nucleotide-binding protein subunit alpha-14 (GNA14) from Bos taurus (Bovine).